The chain runs to 80 residues: Putative defensin-like protein 23 (80 aa).

The first 25 residues, 1 to 25 (MTTTMKIMSFAMLLVLLFSIDVVEG), serve as a signal peptide directing secretion. Disulfide bonds link cysteine 31–cysteine 80, cysteine 41–cysteine 66, cysteine 50–cysteine 76, and cysteine 54–cysteine 78.

Belongs to the DEFL family.

Its subcellular location is the secreted. In Arabidopsis thaliana (Mouse-ear cress), this protein is Putative defensin-like protein 23.